The sequence spans 156 residues: Toxin Res (156 aa).

It belongs to the MbcT/ParT/Res family. Homodimer. Forms a complex with cognate antitoxin Xre.

Its function is as follows. Toxic component of a type II toxin-antitoxin (TA) system. Expression in E.coli inhibits cell growth; bacteriostasis is neutralized by expression of cognate antitoxin Xre. Expression in E.coli leads to almost complete depletion of intracellular NAD(+): NAD(+) levels are partially restored when coexpressed with antitoxin Xre. This Photorhabdus laumondii subsp. laumondii (strain DSM 15139 / CIP 105565 / TT01) (Photorhabdus luminescens subsp. laumondii) protein is Toxin Res.